The primary structure comprises 87 residues: MAEANTMRRTATGKVISNKGDKTITVLVERRVQHPIYGKIIKRSTKLMAHDEENQCREGDLVTIEECRPLSKRKAWMLVNVVEQSKA.

Belongs to the universal ribosomal protein uS17 family. Part of the 30S ribosomal subunit.

Functionally, one of the primary rRNA binding proteins, it binds specifically to the 5'-end of 16S ribosomal RNA. This is Small ribosomal subunit protein uS17 from Alcanivorax borkumensis (strain ATCC 700651 / DSM 11573 / NCIMB 13689 / SK2).